Consider the following 1063-residue polypeptide: Valine--tRNA ligase, mitochondrial (1063 aa).

A mitochondrion-targeting transit peptide spans 1-26 (MPHLPLASFRPPFWGLRHSRGLPRFH). The disordered stretch occupies residues 25–53 (FHSVSTQSEPHGSPISRRNREAKQKRLRE). Positions 42–53 (RNREAKQKRLRE) are enriched in basic and acidic residues. The 'HIGH' region signature appears at 146 to 156 (PNVTGSLHIGH). Residues 658-662 (KMSKS) carry the 'KMSKS' region motif. Lys-661 lines the ATP pocket.

It belongs to the class-I aminoacyl-tRNA synthetase family.

Its subcellular location is the mitochondrion. The enzyme catalyses tRNA(Val) + L-valine + ATP = L-valyl-tRNA(Val) + AMP + diphosphate. Catalyzes the attachment of valine to tRNA(Val) in a two-step reaction: valine is first activated by ATP to form Val-AMP and then transferred to the acceptor end of tRNA(Val). This is Valine--tRNA ligase, mitochondrial (VARS2) from Homo sapiens (Human).